Here is a 287-residue protein sequence, read N- to C-terminus: Acetylglutamate kinase (287 aa).

Residues 65–66 (GG), R87, and N181 contribute to the substrate site.

This sequence belongs to the acetylglutamate kinase family. ArgB subfamily.

Its subcellular location is the cytoplasm. The enzyme catalyses N-acetyl-L-glutamate + ATP = N-acetyl-L-glutamyl 5-phosphate + ADP. Its pathway is amino-acid biosynthesis; L-arginine biosynthesis; N(2)-acetyl-L-ornithine from L-glutamate: step 2/4. Its function is as follows. Catalyzes the ATP-dependent phosphorylation of N-acetyl-L-glutamate. The sequence is that of Acetylglutamate kinase from Syntrophomonas wolfei subsp. wolfei (strain DSM 2245B / Goettingen).